A 227-amino-acid polypeptide reads, in one-letter code: Interleukin-6 (227 aa).

Residues 1–22 form the signal peptide; sequence MASISYLLAPLVLAAVLQPTAG. Positions 24–45 are disordered; it reads PLDAPTESPAGETSGEEAETGS. Cysteines 93 and 103 form a disulfide.

Belongs to the IL-6 superfamily. Component of a hexamer of two molecules each of IL6, IL6R and IL6ST; first binds to IL6R to associate with the signaling subunit IL6ST. After induction, highly expressed in spleen. Can also be expressed in kidney after incubation with PHA.

It is found in the secreted. Its function is as follows. Cytokine with a wide variety of biological functions in immunity, tissue regeneration, and metabolism. Binds to IL6R, then the complex associates to the signaling subunit IL6ST/gp130 to trigger the intracellular IL6-signaling pathway. The interaction with the membrane-bound IL6R and IL6ST stimulates 'classic signaling', whereas the binding of IL6 and soluble IL6R to IL6ST stimulates 'trans-signaling'. Alternatively, 'cluster signaling' occurs when membrane-bound IL6:IL6R complexes on transmitter cells activate IL6ST receptors on neighboring receiver cells. This Takifugu rubripes (Japanese pufferfish) protein is Interleukin-6 (il6).